The primary structure comprises 171 residues: Laminin subunit beta-1 (171 aa).

An N-terminal signal peptide occupies residues 1–29 (MNGRTQNLWFSTFRLVIVYALFFAKLCFG). 5 cysteine pairs are disulfide-bonded: cysteine 59-cysteine 69, cysteine 72-cysteine 81, cysteine 84-cysteine 100, cysteine 103-cysteine 118, and cysteine 105-cysteine 128. Laminin EGF-like domains follow at residues 66-102 (TGVC…VCQR), 103-160 (CQCP…TCKK), and 161-171 (CLCNGNINSAS). N-linked (GlcNAc...) asparagine glycosylation occurs at asparagine 130. 2 disulfides stabilise this stretch: cysteine 131-cysteine 140 and cysteine 143-cysteine 158.

In terms of assembly, laminin is a complex glycoprotein, consisting of three different polypeptide chains (alpha, beta, gamma), which are bound to each other by disulfide bonds into a cross-shaped molecule comprising one long and three short arms with globules at each end.

It localises to the secreted. The protein localises to the extracellular space. The protein resides in the extracellular matrix. It is found in the basement membrane. Its function is as follows. Binding to cells via a high affinity receptor, laminin is thought to mediate the attachment, migration and organization of cells into tissues during embryonic development by interacting with other extracellular matrix components. The polypeptide is Laminin subunit beta-1 (Hydra vulgaris (Hydra)).